We begin with the raw amino-acid sequence, 486 residues long: MITTEIKRVKNHINGEWVESTGTEVEAVPNPATGKIIAYVPLSPKEDVEKAVEAAKAAFETWSKVPVPNRSRNLYKYLQLLQENKDELAKIITLENGKTLTDATGEVQRGIEAVELATSAPNLMMGQALPNIASGIDGSIWRYPIGVVAGITPFNFPMMIPLWMFPLAIACGNTFVLKTSERTPLLAERLVELFYEAGFPKGVLNLVQGGKDVVNSILENKDIQAVSFVGSEPVARYVYETGTKHGKRVQALAGAKNHAIVMPDCNLEKTVQGVIGSAFASSGERCMACSVVAVVDEIADEFIDVLVAETKKLKVGDGFNEDNYVGPLIRESHKERVLGYISSGVADGATLLVDGRKINEEVGEGYFVGATIFDGVNQEMKIWQDEIFAPVLSIVRVKDLEEGIKLTNQSKFANGAVIYTSNGKHAQTFRDNIDAGMIGVNVNVPAPMAFFAFAGNKASFFGDLGTNGTDGVQFYTRKKVVTERWF.

The NAD(+) site is built by F154, K178, E181, R182, and S231. Residue C286 is the Nucleophile of the active site. E386 contacts NAD(+).

It belongs to the aldehyde dehydrogenase family. IolA subfamily. In terms of assembly, homotetramer.

The enzyme catalyses 3-oxopropanoate + NAD(+) + CoA + H2O = hydrogencarbonate + acetyl-CoA + NADH + H(+). It catalyses the reaction 2-methyl-3-oxopropanoate + NAD(+) + CoA + H2O = propanoyl-CoA + hydrogencarbonate + NADH + H(+). It functions in the pathway polyol metabolism; myo-inositol degradation into acetyl-CoA; acetyl-CoA from myo-inositol: step 7/7. Catalyzes the oxidation of malonate semialdehyde (MSA) and methylmalonate semialdehyde (MMSA) into acetyl-CoA and propanoyl-CoA, respectively. Is involved in a myo-inositol catabolic pathway. Bicarbonate, and not CO2, is the end-product of the enzymatic reaction. The protein is Malonate-semialdehyde dehydrogenase of Bacillus cereus (strain G9842).